The sequence spans 139 residues: Spermatogenesis-associated protein 33 (139 aa).

An interaction with ATG16L1 region spans residues 1–67 (MVTHAAGART…TAKHPPPAAS (67 aa)). Residues 1–83 (MVTHAAGART…VKQKSSRKKV (83 aa)) are disordered. The segment covering 25 to 50 (KSKEKLMEKHSQEARQADRESEKPVD) has biased composition (basic and acidic residues). Residues 68–139 (LEEKPDVKQK…ADAYNSHLKE (72 aa)) form an interaction with VDAC2 region. The PQIIIT motif lies at 86-91 (PQIIIT). A Phosphoserine modification is found at serine 94. A compositionally biased stretch (polar residues) spans 97–109 (TLVSCSSSGSDQQ). Residues 97–139 (TLVSCSSSGSDQQRTIREPEDWGPYRRHRNPSTADAYNSHLKE) are disordered. The segment covering 110 to 120 (RTIREPEDWGP) has biased composition (basic and acidic residues).

In terms of assembly, interacts (via PQIIIT motif) with PPP3R1, PPP3R2, PPP3CA, PPP3CB and PPP3CC. Interacts with VDAC2. Interacts with ATG16L1 (via WD repeats).

It is found in the cytoplasm. It localises to the cytosol. Its subcellular location is the nucleus. The protein localises to the mitochondrion. In terms of biological role, plays an important role in sperm motility and male fertility. Required for sperm midpiece flexibility and for the localization of sperm calcineurin to the mitochondria. Promotes mitophagy as well as acts as an autophagy mediator in male germline cells. Links damaged mitochondria to autophagosomes via its binding to the outer mitochondrial membrane protein VDAC2, as well as to key autophagy machinery component ATG16L1. In Homo sapiens (Human), this protein is Spermatogenesis-associated protein 33 (SPATA33).